The following is a 59-amino-acid chain: UPF0181 protein YoaH (59 aa).

The protein belongs to the UPF0181 family.

The polypeptide is UPF0181 protein YoaH (Escherichia coli O127:H6 (strain E2348/69 / EPEC)).